We begin with the raw amino-acid sequence, 191 residues long: Small ribosomal subunit protein uS7 (191 aa).

Positions 56-80 are disordered; it reads NKSGEQGDGDGEGGGKAGGIKKRSL.

Belongs to the universal ribosomal protein uS7 family. As to quaternary structure, part of the 30S ribosomal subunit. Contacts proteins S9 and S11.

One of the primary rRNA binding proteins, it binds directly to 16S rRNA where it nucleates assembly of the head domain of the 30S subunit. Is located at the subunit interface close to the decoding center, probably blocks exit of the E-site tRNA. The polypeptide is Small ribosomal subunit protein uS7 (Coxiella burnetii (strain CbuG_Q212) (Coxiella burnetii (strain Q212))).